A 301-amino-acid polypeptide reads, in one-letter code: MSSEFIEAGAADRVRILSEALPYLQQFAGRTVVVKYGGAAMKQEELKEAVMRDIVFLACVGMRPVVVHGGGPEINAWLGRVGIEPQFHNGLRVTDADTMEVVEMVLVGRVNKDIVSRINTTGGRAVGFCGTDGRLVLARPHDQEGIGFVGEVNSVNSEVIEPLLERGYIPVISSVAADENGQSFNINADTVAGEIAAALNAEKLILLTDTRGILEDPKRPESLIPRLNIPQSRELIAQGIVGGGMIPKVDCCIRSLAQGVRAAHIIDGRIPHALLLEIFTDAGIGTMIVGSGYHEAHQPWQ.

Residues 70 to 71, Arg-92, and Asn-185 each bind substrate; that span reads GG.

The protein belongs to the acetylglutamate kinase family. ArgB subfamily.

It localises to the cytoplasm. The enzyme catalyses N-acetyl-L-glutamate + ATP = N-acetyl-L-glutamyl 5-phosphate + ADP. Its pathway is amino-acid biosynthesis; L-arginine biosynthesis; N(2)-acetyl-L-ornithine from L-glutamate: step 2/4. Functionally, catalyzes the ATP-dependent phosphorylation of N-acetyl-L-glutamate. The sequence is that of Acetylglutamate kinase from Synechococcus elongatus (strain ATCC 33912 / PCC 7942 / FACHB-805) (Anacystis nidulans R2).